A 471-amino-acid chain; its full sequence is Tryptophanase (471 aa).

An N6-acetyllysine mark is found at Lys5, Lys115, and Lys156. Residue Lys270 is modified to N6-(pyridoxal phosphate)lysine. Position 450 is an N6-acetyllysine (Lys450).

Belongs to the beta-eliminating lyase family. As to quaternary structure, homotetramer. Pyridoxal 5'-phosphate serves as cofactor.

The catalysed reaction is L-tryptophan + H2O = indole + pyruvate + NH4(+). Its pathway is amino-acid degradation; L-tryptophan degradation via pyruvate pathway; indole and pyruvate from L-tryptophan: step 1/1. The sequence is that of Tryptophanase from Escherichia fergusonii (strain ATCC 35469 / DSM 13698 / CCUG 18766 / IAM 14443 / JCM 21226 / LMG 7866 / NBRC 102419 / NCTC 12128 / CDC 0568-73).